A 380-amino-acid chain; its full sequence is Calreticulin-3 (380 aa).

Residues 1–19 (MVSARALLWAICVLRVALA) form the signal peptide. Residues 20–197 (TVYFQEEFLD…GQSIESGSIE (178 aa)) form an N-domain region. Asn42 carries N-linked (GlcNAc...) asparagine glycosylation. Tyr109, Lys111, Tyr128, and Asp135 together coordinate an alpha-D-glucoside. A disulfide bridge connects residues Cys137 and Cys163. 7 consecutive repeat copies span residues 191 to 202 (IESGSIEYDWNL), 209 to 220 (EKTSLDSRDWDQ), 222 to 231 (EGSKVQDWEK), 235 to 246 (DAGASKPSDWNS), 250 to 256 (GDWLQKP), 260 to 268 (DGLKAEGID), and 270 to 280 (DVWLHQKMRPA). The segment at 191–246 (IESGSIEYDWNLTSLRKTEKTSLDSRDWDQVEGSKVQDWEKHFLDAGASKPSDWNS) is 4 X approximate repeats. Residues 198-291 (YDWNLTSLRK…YLTQYDLSEF (94 aa)) form a P-domain region. Asn201 carries N-linked (GlcNAc...) asparagine glycosylation. The 3 X approximate repeats stretch occupies residues 250–280 (GDWLQKPPYEDGLKAEGIDKDVWLHQKMRPA). The segment at 292 to 380 (ENIGAIGLEL…FSRFHRQGEL (89 aa)) is C-domain. Glu300 is a binding site for an alpha-D-glucoside. The Prevents secretion from ER signature appears at 377 to 380 (QGEL).

It belongs to the calreticulin family. As to quaternary structure, component of an EIF2 complex at least composed of CELF1/CUGBP1, CALR, CALR3, EIF2S1, EIF2S2, HSP90B1 and HSPA5. Testis specific, absent in mature sperm.

It localises to the endoplasmic reticulum lumen. In terms of biological role, CALR3 capacity for calcium-binding may be absent or much lower than that of CALR. During spermatogenesis, may act as a lectin-independent chaperone for specific client proteins such as ADAM3. Required for sperm fertility. The sequence is that of Calreticulin-3 (Calr3) from Mus musculus (Mouse).